Reading from the N-terminus, the 237-residue chain is N-demethylindolmycin N-methyltransferase (237 aa).

Belongs to the methyltransferase superfamily.

It carries out the reaction N-demethylindolmycin + S-adenosyl-L-methionine = indolmycin + S-adenosyl-L-homocysteine + H(+). Its function is as follows. Involved in the biosynthesis of the antibiotic indolmycin, an inhibitor of the bacterial tryptophan-tRNA synthetases. Catalyzes the methylation of N-demethylindolmycin to yield indolmycin, with S-adenosylmethionine (AdoMet) acting as the methyl donor. In Streptomyces griseus, this protein is N-demethylindolmycin N-methyltransferase.